The following is a 134-amino-acid chain: Probable glycine cleavage system H protein (134 aa).

The Lipoyl-binding domain occupies Thr29 to Lys110. Lys70 is subject to N6-lipoyllysine.

Belongs to the GcvH family. As to quaternary structure, the glycine cleavage system is composed of four proteins: P, T, L and H. (R)-lipoate serves as cofactor.

The glycine cleavage system catalyzes the degradation of glycine. The H protein shuttles the methylamine group of glycine from the P protein to the T protein. This chain is Probable glycine cleavage system H protein, found in Pyrococcus abyssi (strain GE5 / Orsay).